Consider the following 142-residue polypeptide: Large ribosomal subunit protein uL16 (142 aa).

Belongs to the universal ribosomal protein uL16 family. In terms of assembly, part of the 50S ribosomal subunit.

Binds 23S rRNA and is also seen to make contacts with the A and possibly P site tRNAs. This Thermotoga maritima (strain ATCC 43589 / DSM 3109 / JCM 10099 / NBRC 100826 / MSB8) protein is Large ribosomal subunit protein uL16.